A 296-amino-acid polypeptide reads, in one-letter code: Cell division protein DivIB (296 aa).

At 1–25 (MMEDKIIHTPRFDEQRRMRRKKRQR) the chain is on the cytoplasmic side. The helical transmembrane segment at 26-46 (LQLFIFLSIVAIVSLILIYMF) threads the bilayer. The Extracellular segment spans residues 47 to 296 (TSISYVKKIS…KELNQVKKNS (250 aa)). Residues 50–118 (SYVKKISVND…NTVSINVEEY (69 aa)) form the POTRA domain.

It belongs to the FtsQ/DivIB family. DivIB subfamily.

It localises to the cell membrane. Its function is as follows. Cell division protein that may be involved in stabilizing or promoting the assembly of the division complex. This chain is Cell division protein DivIB, found in Macrococcus caseolyticus (strain JCSC5402) (Macrococcoides caseolyticum).